A 378-amino-acid polypeptide reads, in one-letter code: S-adenosylmethionine:tRNA ribosyltransferase-isomerase (378 aa).

It belongs to the QueA family. In terms of assembly, monomer.

It is found in the cytoplasm. The catalysed reaction is 7-aminomethyl-7-carbaguanosine(34) in tRNA + S-adenosyl-L-methionine = epoxyqueuosine(34) in tRNA + adenine + L-methionine + 2 H(+). Its pathway is tRNA modification; tRNA-queuosine biosynthesis. Its function is as follows. Transfers and isomerizes the ribose moiety from AdoMet to the 7-aminomethyl group of 7-deazaguanine (preQ1-tRNA) to give epoxyqueuosine (oQ-tRNA). The sequence is that of S-adenosylmethionine:tRNA ribosyltransferase-isomerase from Prochlorococcus marinus (strain MIT 9312).